A 473-amino-acid chain; its full sequence is Cell division protein FtsP (473 aa).

Positions 1–27 (MSLSRRQFIQASGLAMCLGALPFAVQA) form a signal peptide, tat-type signal.

The protein belongs to the FtsP family. In terms of processing, predicted to be exported by the Tat system. The position of the signal peptide cleavage has not been experimentally proven.

It is found in the periplasm. Functionally, cell division protein that is required for growth during stress conditions. May be involved in protecting or stabilizing the divisomal assembly under conditions of stress. The chain is Cell division protein FtsP from Xenorhabdus nematophila (strain ATCC 19061 / DSM 3370 / CCUG 14189 / LMG 1036 / NCIMB 9965 / AN6).